A 473-amino-acid polypeptide reads, in one-letter code: 3-isopropylmalate dehydratase large subunit (473 aa).

[4Fe-4S] cluster is bound by residues Cys-351, Cys-414, and Cys-417.

It belongs to the aconitase/IPM isomerase family. LeuC type 1 subfamily. As to quaternary structure, heterodimer of LeuC and LeuD. Requires [4Fe-4S] cluster as cofactor.

The catalysed reaction is (2R,3S)-3-isopropylmalate = (2S)-2-isopropylmalate. Its pathway is amino-acid biosynthesis; L-leucine biosynthesis; L-leucine from 3-methyl-2-oxobutanoate: step 2/4. Catalyzes the isomerization between 2-isopropylmalate and 3-isopropylmalate, via the formation of 2-isopropylmaleate. This is 3-isopropylmalate dehydratase large subunit from Paracidovorax citrulli (strain AAC00-1) (Acidovorax citrulli).